Here is a 712-residue protein sequence, read N- to C-terminus: Eukaryotic translation initiation factor 3 subunit B (712 aa).

Met-1 bears the N-acetylmethionine mark. The RRM domain maps to 56 to 143 (NIIVVDHLPV…HIFAVNMFDD (88 aa)).

The protein belongs to the eIF-3 subunit B family. Component of the eukaryotic translation initiation factor 3 (eIF-3) complex, which is composed of at least 13 different subunits. Binds to the translation initiation factor TIF3H1.

The protein resides in the cytoplasm. Functionally, RNA-binding component of the eukaryotic translation initiation factor 3 (eIF-3) complex, which is involved in protein synthesis of a specialized repertoire of mRNAs and, together with other initiation factors, stimulates binding of mRNA and methionyl-tRNAi to the 40S ribosome. The eIF-3 complex specifically targets and initiates translation of a subset of mRNAs involved in cell proliferation. The sequence is that of Eukaryotic translation initiation factor 3 subunit B (TIF3B1) from Arabidopsis thaliana (Mouse-ear cress).